The following is a 478-amino-acid chain: Aspartyl/glutamyl-tRNA(Asn/Gln) amidotransferase subunit B (478 aa).

This sequence belongs to the GatB/GatE family. GatB subfamily. As to quaternary structure, heterotrimer of A, B and C subunits.

The enzyme catalyses L-glutamyl-tRNA(Gln) + L-glutamine + ATP + H2O = L-glutaminyl-tRNA(Gln) + L-glutamate + ADP + phosphate + H(+). The catalysed reaction is L-aspartyl-tRNA(Asn) + L-glutamine + ATP + H2O = L-asparaginyl-tRNA(Asn) + L-glutamate + ADP + phosphate + 2 H(+). In terms of biological role, allows the formation of correctly charged Asn-tRNA(Asn) or Gln-tRNA(Gln) through the transamidation of misacylated Asp-tRNA(Asn) or Glu-tRNA(Gln) in organisms which lack either or both of asparaginyl-tRNA or glutaminyl-tRNA synthetases. The reaction takes place in the presence of glutamine and ATP through an activated phospho-Asp-tRNA(Asn) or phospho-Glu-tRNA(Gln). This chain is Aspartyl/glutamyl-tRNA(Asn/Gln) amidotransferase subunit B, found in Pseudothermotoga lettingae (strain ATCC BAA-301 / DSM 14385 / NBRC 107922 / TMO) (Thermotoga lettingae).